A 166-amino-acid polypeptide reads, in one-letter code: 2-C-methyl-D-erythritol 2,4-cyclodiphosphate synthase (166 aa).

2 residues coordinate a divalent metal cation: D15 and H17. Residues 15–17 (DIH) and 43–44 (HS) each bind 4-CDP-2-C-methyl-D-erythritol 2-phosphate. H51 is an a divalent metal cation binding site. 4-CDP-2-C-methyl-D-erythritol 2-phosphate is bound by residues 65-67 (DIG), 141-144 (TTNE), and R151.

Belongs to the IspF family. As to quaternary structure, homotrimer. Requires a divalent metal cation as cofactor.

The enzyme catalyses 4-CDP-2-C-methyl-D-erythritol 2-phosphate = 2-C-methyl-D-erythritol 2,4-cyclic diphosphate + CMP. The protein operates within isoprenoid biosynthesis; isopentenyl diphosphate biosynthesis via DXP pathway; isopentenyl diphosphate from 1-deoxy-D-xylulose 5-phosphate: step 4/6. Its function is as follows. Involved in the biosynthesis of isopentenyl diphosphate (IPP) and dimethylallyl diphosphate (DMAPP), two major building blocks of isoprenoid compounds. Catalyzes the conversion of 4-diphosphocytidyl-2-C-methyl-D-erythritol 2-phosphate (CDP-ME2P) to 2-C-methyl-D-erythritol 2,4-cyclodiphosphate (ME-CPP) with a corresponding release of cytidine 5-monophosphate (CMP). In Prochlorococcus marinus (strain MIT 9215), this protein is 2-C-methyl-D-erythritol 2,4-cyclodiphosphate synthase.